A 345-amino-acid polypeptide reads, in one-letter code: Selenide, water dikinase (345 aa).

C15 is an active-site residue. ATP is bound by residues K18 and 46-48 (SKD). Residue D49 coordinates Mg(2+). Residues D66, D89, and 137–139 (GHS) contribute to the ATP site. D89 lines the Mg(2+) pocket. D225 is a Mg(2+) binding site.

This sequence belongs to the selenophosphate synthase 1 family. Class I subfamily. As to quaternary structure, homodimer. The cofactor is Mg(2+).

It catalyses the reaction hydrogenselenide + ATP + H2O = selenophosphate + AMP + phosphate + 2 H(+). Its function is as follows. Synthesizes selenophosphate from selenide and ATP. The sequence is that of Selenide, water dikinase from Aeromonas salmonicida (strain A449).